The chain runs to 215 residues: Beta-crystallin A3-1 (215 aa).

Residues 1 to 30 are N-terminal arm; sequence MEIPVDQTEREDITSEKMAQINPLPVHLGP. Beta/gamma crystallin 'Greek key' domains lie at 31-70 and 71-117; these read WKIT…KVEC and GAWI…RPIC. The segment at 118–123 is connecting peptide; it reads SANHIE. Beta/gamma crystallin 'Greek key' domains follow at residues 124 to 165 and 166 to 214; these read SKLV…KVQC and GAWV…RRIQ.

This sequence belongs to the beta/gamma-crystallin family. In terms of assembly, homo/heterodimer, or complexes of higher-order. The structure of beta-crystallin oligomers seems to be stabilized through interactions between the N-terminal arms. Post-translationally, the N-terminus is blocked.

Crystallins are the dominant structural components of the vertebrate eye lens. The polypeptide is Beta-crystallin A3-1 (Aquarana catesbeiana (American bullfrog)).